We begin with the raw amino-acid sequence, 291 residues long: Popeye domain-containing protein 3 (291 aa).

A glycan (N-linked (GlcNAc...) asparagine) is linked at Asn4. 3 helical membrane passes run 27 to 44, 48 to 70, and 77 to 99; these read GAIY…FMGG, FGLL…WAWV, and IFSW…AYQV.

It belongs to the popeye family. As to expression, expressed in cardiac and skeletal muscle.

The protein resides in the membrane. In terms of biological role, may play a role in the maintenance of heart function mediated, at least in part, through cAMP-binding. May play a role in the regulation of KCNK2-mediated current amplitude. This is Popeye domain-containing protein 3 (Popdc3) from Mus musculus (Mouse).